The primary structure comprises 474 residues: MSPVASSRIEKDLLGTLEVPADAYYGIQTLRAVNNFRLSGVPLSHYPKLVVALAMVKQAAADANRQLGHLPEDKHAAISEACARLIRGDFHEQFVVDMIQGGAGTSTNMNANEVIANIALEAMGHTKGEYKYLHPNNDVNMAQSTNDAYPTAIRLGLLLGHDTLLASLDSLIQAFAAKGVEFAGVLKMGRTQLQDAVPMTLGQEFHAFATTLGEDLDRLRRLAPELLTEVNLGGTAIGTGINADPGYQKLAVERLAAISGQPLKPAADLIEATSDMGAFVLFSGMLKRTAVKLSKICNDLRLLSSGPRTGINEINLPPRQPGSSIMPGKVNPVIPEAVNQVAFEVIGNDLALTLAAEGGQLQLNVMEPLIAYKIFDSIRLLQRAMDMLREHCITGITANVERCHELVEHSIGLVTALNPYIGYENSTRIAKTALESGRGVLELVREEKLLDEATLADILLPENMIAPRLIPLRA.

L-aspartate-binding residues include threonine 105, serine 144, threonine 145, asparagine 146, and threonine 191. The tract at residues 322 to 331 (GSSIMPGKVN) is SS loop. Residue serine 323 is the Proton acceptor of the active site. Positions 324 and 329 each coordinate L-aspartate.

It belongs to the class-II fumarase/aspartase family. Aspartase subfamily. In terms of assembly, homotetramer.

It carries out the reaction L-aspartate = fumarate + NH4(+). The catalysed reaction is L-phenylalanine = (E)-cinnamate + NH4(+). With respect to regulation, does not require any divalent metal ion for activation of catalysis, but the activity is slightly increased in the presence of Mg(2+), Mn(2+), Ca(2+) or Co(2+). Functionally, catalyzes the reversible conversion of L-aspartate to fumarate and ammonia. Can also utilize L-phenylalanine to form cinnamic acid. Exhibits the highest specific activity towards L-phenylalanine, but catalytic efficiency is 3-fold higher with L-aspartate. The polypeptide is Aspartate ammonia-lyase (Pseudomonas aeruginosa (strain ATCC 15692 / DSM 22644 / CIP 104116 / JCM 14847 / LMG 12228 / 1C / PRS 101 / PAO1)).